A 392-amino-acid chain; its full sequence is Early estrogen-induced gene 1 protein (392 aa).

The 144-residue stretch at 2–145 (AFLMKKKKFK…ILKVTIGMFL (144 aa)) folds into the C2 NT-type domain. A required for interaction with TNFRSF11A/RANK region spans residues 129–138 (NTRQDNSILK). A disordered region spans residues 173–324 (LTCKGGGTSS…RKKDSVESHP (152 aa)). Low complexity predominate over residues 183–194 (GGSSSTNSLTGS). Polar residues predominate over residues 228–255 (SRNSSYASQQSKLSGYSTEHSRSSSLSD). A compositionally biased stretch (low complexity) spans 262-273 (TSTSSSASGGLS). Basic and acidic residues-rich tracts occupy residues 281 to 300 (GMEREHRPSEKPPRPPEKPP) and 307 to 324 (HLSDRSFRRKKDSVESHP).

It belongs to the EEIG family. In terms of assembly, part of a complex composed of EEIG1, TNFRSF11A/RANK, PLCG2, GAB2, TEC and BTK; complex formation increases in the presence of TNFSF11/RANKL. Interacts with PRDM1/BLIMP1; following TNFSF11/RANKL stimulation in bone marrow-derived macrophages, the interaction promotes the binding of PRDM1/BLIMP1 to the gene promoter of IRF8. Interacts (via N-terminus) with TNFRSF11A/RANK (via cytoplasmic domain); when in the presence of TNFSF11/RANKL. In terms of tissue distribution, expressed during TNFSF11/RANKL-induced differentiation of bone marrow-derived macrophages to osteoclasts.

The protein localises to the nucleus. Its subcellular location is the cytoplasm. The protein resides in the membrane raft. In terms of biological role, key component of TNFSF11/RANKL- and TNF-induced osteoclastogenesis pathways, thereby mediates bone resorption in pathological bone loss conditions. Required for TNFSF11/RANKL-induced osteoclastogenesis via its interaction with TNFRSF11A/RANK, thereby facilitates the downsteam transcription of NFATC1 and activation of PLCG2. Facilitates recruitment of the transcriptional repressor PRDM1/BLIMP1 to the promoter of the anti-osteoclastogenesis gene IRF8, thereby resulting in transcription of osteoclast differentiation factors. May play a role in estrogen action. The polypeptide is Early estrogen-induced gene 1 protein (Eeig1) (Mus musculus (Mouse)).